The following is a 198-amino-acid chain: Photosystem I assembly protein Ycf4 (198 aa).

Residues 1 to 20 (MTASTTINKGDSPNGDSSAS) form a disordered region. 2 consecutive transmembrane segments (helical) span residues 36-58 (YWWA…SSYL) and 78-100 (LVMG…VILW).

It belongs to the Ycf4 family.

It is found in the cellular thylakoid membrane. Seems to be required for the assembly of the photosystem I complex. This chain is Photosystem I assembly protein Ycf4, found in Nostoc sp. (strain PCC 7120 / SAG 25.82 / UTEX 2576).